Consider the following 165-residue polypeptide: Transcriptional repressor NrdR (165 aa).

A zinc finger lies at 3 to 34 (CPYCGQLNNRVVDSRLSRSEFAVRRRRECLDC). The region spanning 49–139 (VMVVKKDGRR…VYREFKDVDD (91 aa)) is the ATP-cone domain.

It belongs to the NrdR family. Zn(2+) is required as a cofactor.

In terms of biological role, negatively regulates transcription of bacterial ribonucleotide reductase nrd genes and operons by binding to NrdR-boxes. In Desulforapulum autotrophicum (strain ATCC 43914 / DSM 3382 / VKM B-1955 / HRM2) (Desulfobacterium autotrophicum), this protein is Transcriptional repressor NrdR.